The chain runs to 445 residues: Eukaryotic peptide chain release factor subunit 1 (445 aa).

This sequence belongs to the eukaryotic release factor 1 family. Heterodimer of two subunits, one of which binds GTP.

It is found in the cytoplasm. Directs the termination of nascent peptide synthesis (translation) in response to the termination codon UGA. In Stylonchia UAA and UAG codes for glutamine. The chain is Eukaryotic peptide chain release factor subunit 1 (ERF1) from Stylonychia mytilus (Ciliate).